Consider the following 266-residue polypeptide: Vitamin B12-binding protein (266 aa).

The first 22 residues, 1-22 (MAKSLFRALVALSFLAPLWLNA), serve as a signal peptide directing secretion. A Fe/B12 periplasmic-binding domain is found at 25–266 (RVITLSPANT…QLCNALSQVD (242 aa)). Cyanocob(III)alamin is bound by residues tyrosine 50 and 242–246 (DWFER). The cysteines at positions 183 and 259 are disulfide-linked.

The protein belongs to the BtuF family. The complex is composed of two ATP-binding proteins (BtuD), two transmembrane proteins (BtuC) and a solute-binding protein (BtuF).

It localises to the periplasm. Its function is as follows. Part of the ABC transporter complex BtuCDF involved in vitamin B12 import. Binds vitamin B12 and delivers it to the periplasmic surface of BtuC. In Shigella flexneri, this protein is Vitamin B12-binding protein.